The chain runs to 202 residues: Protein EMBRYO DEFECTIVE 514 (202 aa).

Disordered stretches follow at residues 1–69 and 168–202; these read MAEE…PVKL and MKTPGANGNGHGGGRGGGGGRRGGRGGGRGGRFRR. Position 2 is an N-acetylalanine (Ala2). Basic and acidic residues-rich tracts occupy residues 33–42 and 51–65; these read ETGDEKRERE and GESKKQKVGEEEKSG. Gly residues predominate over residues 174-202; it reads NGNGHGGGRGGGGGRRGGRGGGRGGRFRR.

As to expression, expressed in leaves, flowers and embryos at globular stage.

It localises to the nucleus. May play a role in ribosome biogenesis and in determining the rate of cell division. Involved in a process essential for nuclear and nucleolar functions. The protein is Protein EMBRYO DEFECTIVE 514 of Arabidopsis thaliana (Mouse-ear cress).